A 305-amino-acid polypeptide reads, in one-letter code: MHIHVLGSAAGGGFPQWNCNCPNCDGLRKGTIKAKKRTQSSICVSADGINWVLFNTSPDILQQIQEFAPLQPGRAIRDSGIVGIVLIDAQIDHTTGLLMLREGQVKREIYCTDMVYQDLTTGNPLLNILDHYCGVNRHDIPIDGKHSFSVEHAPGLRFTAVALKSAAPPYSPHRHDPHPGDTIGVLIEDLNNGKKAFYAPGLGEIEPHLPALMEQADCIMVDGTFWTDTEMLDMGLMSKKARDIGHNPQSGPGGMMEVLDGYPGARRVLIHINNTNPILREDSAERVELTRRGIEVAYDGMDIIL.

This sequence belongs to the PqqB family.

It participates in cofactor biosynthesis; pyrroloquinoline quinone biosynthesis. Its function is as follows. May be involved in the transport of PQQ or its precursor to the periplasm. The polypeptide is Coenzyme PQQ synthesis protein B (Methylobacillus flagellatus (strain ATCC 51484 / DSM 6875 / VKM B-1610 / KT)).